A 451-amino-acid chain; its full sequence is Cysteine protease ATG4 (451 aa).

Cys-122 acts as the Nucleophile in catalysis. Catalysis depends on residues Asp-297 and His-299.

Belongs to the peptidase C54 family. In terms of assembly, interacts with ATG8.

Its subcellular location is the cytoplasm. The protein resides in the nucleus. It is found in the preautophagosomal structure. The enzyme catalyses [protein]-C-terminal L-amino acid-glycyl-phosphatidylethanolamide + H2O = [protein]-C-terminal L-amino acid-glycine + a 1,2-diacyl-sn-glycero-3-phosphoethanolamine. Its function is as follows. Cysteine protease that plays a key role in cytoplasm to vacuole transport (Cvt) and autophagy by mediating both proteolytic activation and delipidation of ATG8. Required for selective autophagic degradation of the nucleus (nucleophagy) as well as for mitophagy which contributes to regulate mitochondrial quantity and quality by eliminating the mitochondria to a basal level to fulfill cellular energy requirements and preventing excess ROS production. The protease activity is required for proteolytic activation of ATG8: cleaves the C-terminal amino acid of ATG8 to reveal a C-terminal glycine. ATG8 ubiquitin-like activity requires the exposure of the glycine at the C-terminus for its conjugation to phosphatidylethanolamine (PE) and its insertion to membranes, which is necessary for autophagy. The ATG8-PE conjugate mediates tethering between adjacent membranes and stimulates membrane hemifusion, leading to expansion of the autophagosomal membrane during autophagy. In addition to the protease activity, also catalyzes deconjugation of PE-conjugated forms of ATG8 during macroautophagy: ATG8 delipidation is required to release the protein from membranes, which facilitates multiple events during macroautophagy, and especially for efficient autophagosome biogenesis, the assembly of ATG9-containing tubulovesicular clusters into phagophores/autophagosomes, and for the disassembly of PAS-associated ATG components. ATG8 delipidation by ATG4 also recycles ATG8-PE generated on inappropriate membranes to maintain a reservoir of unlipidated ATG8 that is required for autophagosome formation at the PAS. This is Cysteine protease ATG4 from Kluyveromyces marxianus (strain DMKU3-1042 / BCC 29191 / NBRC 104275) (Yeast).